The following is a 947-amino-acid chain: Isoleucine--tRNA ligase (947 aa).

Residues 57 to 67 carry the 'HIGH' region motif; that stretch reads PYANGNIHLGH. Position 568 (Glu-568) interacts with L-isoleucyl-5'-AMP. Residues 609 to 613 carry the 'KMSKS' region motif; it reads KMSKS. Residue Lys-612 coordinates ATP. Zn(2+) contacts are provided by Cys-908, Cys-911, Cys-926, and Cys-929.

This sequence belongs to the class-I aminoacyl-tRNA synthetase family. IleS type 1 subfamily. Monomer. Zn(2+) is required as a cofactor.

The protein resides in the cytoplasm. The catalysed reaction is tRNA(Ile) + L-isoleucine + ATP = L-isoleucyl-tRNA(Ile) + AMP + diphosphate. Its function is as follows. Catalyzes the attachment of isoleucine to tRNA(Ile). As IleRS can inadvertently accommodate and process structurally similar amino acids such as valine, to avoid such errors it has two additional distinct tRNA(Ile)-dependent editing activities. One activity is designated as 'pretransfer' editing and involves the hydrolysis of activated Val-AMP. The other activity is designated 'posttransfer' editing and involves deacylation of mischarged Val-tRNA(Ile). This chain is Isoleucine--tRNA ligase, found in Persephonella marina (strain DSM 14350 / EX-H1).